Consider the following 204-residue polypeptide: Pyridoxal 5'-phosphate synthase subunit PdxT (204 aa).

52–54 (GES) contributes to the L-glutamine binding site. Cysteine 84 serves as the catalytic Nucleophile. Residues arginine 116 and 143–144 (IR) each bind L-glutamine. Active-site charge relay system residues include histidine 184 and glutamate 186.

This sequence belongs to the glutaminase PdxT/SNO family. As to quaternary structure, in the presence of PdxS, forms a dodecamer of heterodimers. Only shows activity in the heterodimer.

It catalyses the reaction aldehydo-D-ribose 5-phosphate + D-glyceraldehyde 3-phosphate + L-glutamine = pyridoxal 5'-phosphate + L-glutamate + phosphate + 3 H2O + H(+). It carries out the reaction L-glutamine + H2O = L-glutamate + NH4(+). It functions in the pathway cofactor biosynthesis; pyridoxal 5'-phosphate biosynthesis. Its function is as follows. Catalyzes the hydrolysis of glutamine to glutamate and ammonia as part of the biosynthesis of pyridoxal 5'-phosphate. The resulting ammonia molecule is channeled to the active site of PdxS. The chain is Pyridoxal 5'-phosphate synthase subunit PdxT from Pyrobaculum aerophilum (strain ATCC 51768 / DSM 7523 / JCM 9630 / CIP 104966 / NBRC 100827 / IM2).